The following is a 546-amino-acid chain: Tyrosine-protein kinase yes (546 aa).

The span at 1–18 (MGCVKSKEDKGPTQKYRP) shows a compositional bias: basic and acidic residues. The interval 1–58 (MGCVKSKEDKGPTQKYRPDPTNPTPGSHMGLYGPDPTQMGQSPALKGPTNNYNSRSSG) is disordered. Glycine 2 carries N-myristoyl glycine lipidation. The S-palmitoyl cysteine; in membrane form moiety is linked to residue cysteine 3. Residues 48–58 (PTNNYNSRSSG) are compositionally biased toward polar residues. The 62-residue stretch at 94–155 (GGVTFFVALY…PSNYVAPADS (62 aa)) folds into the SH3 domain. The 98-residue stretch at 161–258 (WYFGKMGRKD…GLCYRLTTVC (98 aa)) folds into the SH2 domain. Residues 280–533 (LRLELKLGQG…YIQSFLEDYF (254 aa)) form the Protein kinase domain. Residues 286 to 294 (LGQGCFGEV) and lysine 308 each bind ATP. Aspartate 399 serves as the catalytic Proton acceptor. The residue at position 429 (tyrosine 429) is a Phosphotyrosine; by autocatalysis. Phosphotyrosine; by CSK is present on tyrosine 540.

Belongs to the protein kinase superfamily. Tyr protein kinase family. SRC subfamily. Post-translationally, autophosphorylation at Tyr-429 maintains enzyme activity. Palmitoylation at Cys-3 promotes membrane localization. Widely expressed.

The protein resides in the cell membrane. The protein localises to the cytoplasm. It localises to the cytoskeleton. Its subcellular location is the microtubule organizing center. It is found in the centrosome. The protein resides in the cytosol. The protein localises to the cell junction. The enzyme catalyses L-tyrosyl-[protein] + ATP = O-phospho-L-tyrosyl-[protein] + ADP + H(+). In terms of biological role, non-receptor protein tyrosine kinase that is involved in the regulation of cell growth and survival, apoptosis, cell-cell adhesion, cytoskeleton remodeling, differentiation, G2/M progression and cytokinesis. Required for convergent extension cell movements during gastrulation, acting with fyna via rhoa. May be required for epiboly to occur, possibly through its effects in calcium signaling. During embryonic development, phosphorylates ptk2.1/fak. This chain is Tyrosine-protein kinase yes (yes1), found in Danio rerio (Zebrafish).